The primary structure comprises 274 residues: ATP synthase subunit delta (274 aa).

The protein belongs to the ATPase delta chain family. In terms of assembly, F-type ATPases have 2 components, F(1) - the catalytic core - and F(0) - the membrane proton channel. F(1) has five subunits: alpha(3), beta(3), gamma(1), delta(1), epsilon(1). F(0) has three main subunits: a(1), b(2) and c(10-14). The alpha and beta chains form an alternating ring which encloses part of the gamma chain. F(1) is attached to F(0) by a central stalk formed by the gamma and epsilon chains, while a peripheral stalk is formed by the delta and b chains.

The protein resides in the cell membrane. F(1)F(0) ATP synthase produces ATP from ADP in the presence of a proton or sodium gradient. F-type ATPases consist of two structural domains, F(1) containing the extramembraneous catalytic core and F(0) containing the membrane proton channel, linked together by a central stalk and a peripheral stalk. During catalysis, ATP synthesis in the catalytic domain of F(1) is coupled via a rotary mechanism of the central stalk subunits to proton translocation. In terms of biological role, this protein is part of the stalk that links CF(0) to CF(1). It either transmits conformational changes from CF(0) to CF(1) or is implicated in proton conduction. In Salinispora arenicola (strain CNS-205), this protein is ATP synthase subunit delta.